Reading from the N-terminus, the 93-residue chain is uncharacterized protein (93 aa).

This is an uncharacterized protein from Enterobacter agglomerans (Erwinia herbicola).